A 235-amino-acid polypeptide reads, in one-letter code: Probable transcriptional regulatory protein MPN_478 (235 aa).

Belongs to the TACO1 family.

It localises to the cytoplasm. The sequence is that of Probable transcriptional regulatory protein MPN_478 from Mycoplasma pneumoniae (strain ATCC 29342 / M129 / Subtype 1) (Mycoplasmoides pneumoniae).